We begin with the raw amino-acid sequence, 189 residues long: NADH dehydrogenase [ubiquinone] 1 beta subcomplex subunit 5, mitochondrial (189 aa).

The transit peptide at 1–46 (MAGMSLLRRVSVTAVAALSGRSLGTRLGFGGFLTRGFPKAVAPVRH) directs the protein to the mitochondrion. The chain crosses the membrane as a helical span at residues 73-93 (FYIALTGIPVVIIITLVNVFI).

It belongs to the complex I NDUFB5 subunit family. Complex I is composed of 45 different subunits.

Its subcellular location is the mitochondrion inner membrane. Its function is as follows. Accessory subunit of the mitochondrial membrane respiratory chain NADH dehydrogenase (Complex I), that is believed not to be involved in catalysis. Complex I functions in the transfer of electrons from NADH to the respiratory chain. The immediate electron acceptor for the enzyme is believed to be ubiquinone. This chain is NADH dehydrogenase [ubiquinone] 1 beta subcomplex subunit 5, mitochondrial (NDUFB5), found in Macaca fascicularis (Crab-eating macaque).